The following is a 179-amino-acid chain: MTRLEKIYTDKVAPALNKEFGYKSSMEIPGIKAISLNIGLGEASQNAKLIDGAVEELTAIAGQRAVVTRAKKSIAAFKLREGMPVGSRVTLRRDLMWDFLDKLISFALPRVRDFRGIPDKGFDGRGNFTLGIKELTIFPEIQLDKIEITKGMNVTIVTSAKTDKEGKMLLELLGMPFKK.

The protein belongs to the universal ribosomal protein uL5 family. In terms of assembly, part of the 50S ribosomal subunit; part of the 5S rRNA/L5/L18/L25 subcomplex. Contacts the 5S rRNA and the P site tRNA. Forms a bridge to the 30S subunit in the 70S ribosome.

Its function is as follows. This is one of the proteins that bind and probably mediate the attachment of the 5S RNA into the large ribosomal subunit, where it forms part of the central protuberance. In the 70S ribosome it contacts protein S13 of the 30S subunit (bridge B1b), connecting the 2 subunits; this bridge is implicated in subunit movement. Contacts the P site tRNA; the 5S rRNA and some of its associated proteins might help stabilize positioning of ribosome-bound tRNAs. The sequence is that of Large ribosomal subunit protein uL5 from Maridesulfovibrio salexigens (strain ATCC 14822 / DSM 2638 / NCIMB 8403 / VKM B-1763) (Desulfovibrio salexigens).